The primary structure comprises 426 residues: Enolase (426 aa).

Glutamine 162 provides a ligand contact to (2R)-2-phosphoglycerate. Residue glutamate 204 is the Proton donor of the active site. The Mg(2+) site is built by aspartate 241, glutamate 284, and aspartate 311. (2R)-2-phosphoglycerate contacts are provided by lysine 336, arginine 365, serine 366, and lysine 387. Residue lysine 336 is the Proton acceptor of the active site.

This sequence belongs to the enolase family. Component of the RNA degradosome, a multiprotein complex involved in RNA processing and mRNA degradation. It depends on Mg(2+) as a cofactor.

It localises to the cytoplasm. The protein resides in the secreted. The protein localises to the cell surface. The enzyme catalyses (2R)-2-phosphoglycerate = phosphoenolpyruvate + H2O. It participates in carbohydrate degradation; glycolysis; pyruvate from D-glyceraldehyde 3-phosphate: step 4/5. Catalyzes the reversible conversion of 2-phosphoglycerate (2-PG) into phosphoenolpyruvate (PEP). It is essential for the degradation of carbohydrates via glycolysis. This Thioalkalivibrio sulfidiphilus (strain HL-EbGR7) protein is Enolase.